Consider the following 115-residue polypeptide: Large ribosomal subunit protein uL18 (115 aa).

The segment at 1-24 is disordered; the sequence is MISKPDKNKLRQKRHTRVRGKISG. Over residues 10 to 20 the composition is skewed to basic residues; sequence LRQKRHTRVRG.

This sequence belongs to the universal ribosomal protein uL18 family. In terms of assembly, part of the 50S ribosomal subunit; part of the 5S rRNA/L5/L18/L25 subcomplex. Contacts the 5S and 23S rRNAs.

Its function is as follows. This is one of the proteins that bind and probably mediate the attachment of the 5S RNA into the large ribosomal subunit, where it forms part of the central protuberance. This is Large ribosomal subunit protein uL18 from Lactococcus lactis subsp. cremoris (strain MG1363).